Consider the following 110-residue polypeptide: Spermatid nuclear transition protein 3 (110 aa).

A disordered region spans residues 80-110 (RSCAREKLNQSRKRYQNMRQSQRRGQNQKRR).

The protein resides in the nucleus. It localises to the chromosome. Its function is as follows. Involved in nuclear basic protein transition: histones are replaced by spermatid specific proteins which are themselves replaced by protamines in late spermatids. This is Spermatid nuclear transition protein 3 from Ovis aries (Sheep).